Reading from the N-terminus, the 219-residue chain is Response regulator ArlR (219 aa).

Positions 3–116 (QILIVEDEQN…ELLARIRAIL (114 aa)) constitute a Response regulatory domain. Residue D52 is modified to 4-aspartylphosphate. A DNA-binding region (ompR/PhoB-type) is located at residues 122–219 (KDIIDVNGIT…TVRGVGYVIR (98 aa)).

In terms of processing, phosphorylated by ArlS.

It is found in the cytoplasm. Member of the two-component regulatory system ArlS/ArlR involved in the regulation of adhesion, autolysis, multidrug resistance and virulence. The polypeptide is Response regulator ArlR (arlR) (Staphylococcus aureus (strain USA300)).